We begin with the raw amino-acid sequence, 1890 residues long: MSRAESSWERLVNAALRRDRTGGVAGGNQSSIVGYVPSSLSNNRDIDAILRAADEIQDEDPNIARILCEHGYSLAQNLDPNSEGRGVLQFKTGLMSVIKQKLAKREVGTIDRSQDILRLQEFYRLYREKNNVDTLKEEEKQLRESGAFTDELERKTVKRKRVFATLKVLGSVLEQLAKEIPEELKHVIDSDAAMSEDTIAYNIIPLDAPVTTNATTTFPEVQAAVAALKYFPGLPKLPPDFPIPATRTADMLDFLHYIFGFQKDSVSNQREHIVLLLANEQSRLNIPEETEPKLDDAAVRKVFLKSLENYIKWCDYLCIQPAWSNLEAINGDKKLLFLSLYFLIWGEAANIRFLPECLCYIFHHMVREMDEILRQQVARPAESCMPVDSRGSDDGVSFLDHVIAPLYGVVSAEAFNNDNGRAPHSAWRNYDDFNEYFWSLHSFELGWPWRTSSSFFQKPIPRKKLKTGRAKHRGKTSFVEHRTFLHLYHSFHRLWIFLAMMFQALAIIAFNKDDLTSRKTLLQILSLGPTFVVMKFSESVLEVIMMYGAYSTTRRLAVSRIFLRFIWFGLASVFISFLYVKSLKAPNSDSPIVQLYLIVIAIYGGVQFFFSILMRIPTCHNIANKCDRWPVIRFFKWMRQERHYVGRGMYERTSDFIKYLLFWLVVLSAKFSFAYFLQIKPLVGPTRMIVKQNNIPYSWHDFVSRKNYNALTVASLWAPVVAIYLLDIHIFYTIFSAFLGFLLGARDRLGEIRSLEAIHKLFEEFPGAFMRALHVPLTNRTSDTSHQTVDKKNKVDAAHFAPFWNQIIKSLREEDYITDFEMELLLMPKNSGRLELVQWPLFLLSSKILLAKEIAAESNSQEEILERIERDDYMKYAVEEVYHTLKLVLTETLEAEGRLWVERIYEDIQTSLKERNIHHDFQLNKLSLVITRVTALLGILKENETPEHAKGAIKALQDLYDVMRLDILTFNMRGHYETWNLLTQAWNEGRLFTKLKWPKDPELKALVKRLYSLFTIKDSAAHVPRNLEARRRLQFFTNSLFMDVPPPKSVRKMLSFSVFTPYYSEVVLYSMAELTKRNEDGISILFYLQKIYPDEWKNFLARIGRDENALEGDLDNERDILELRFWASYRGQTLARTVRGMMYYRKALMLQSYLERKAGNDATDAEGFELSPEARAQADLKFTYVVTCQIYGRQKEDQKPEAVDIALLMQRNEALRIAYIDVVDSPKEGKSHTEYYSKLVKADISGKDKEIYSIKLPGDPKLGEGKPENQNHAIVFTRGNAIQTIDMNQDNYFEEALKMRNLLEEFDRDHGIRPPTILGVREHVFTGSVSSLASFMSNQETSFVTLGQRVLAKPLKIRMHYGHPDVFDRVFHITRGGISKASRVINISEDIFAGFNTTLRQGNVTHHEYIQVGKGRDVGLNQIALFEGKVAGGNGEQVLSRDVYRLGQLLDFFRMMSFFFTTVGFYLCTMLTVLTVYIFLYGRAYLALSGVGATIRERAILLDDTALSAALNAQFLFQIGVFTAVPMVLGFILEQGFLQAIVSFITMQFQLCTVFFTFSLGTRTHYFGRTILHGGARYQATGRGFVVKHIKFSENYRLYSRSHFVKAMEVILLLVVYLAYGNDEAGAVSYILLTVSSWFLAVSWLFAPYLFNPAGFEWQKVVEDFKEWTNWLFYRGGIGVKGAESWEAWWEEELSHIRTLSGRIMETILSLRFFIFQYGIVYKLKLQGSDTSFAVYGWSWVAFAMIIVLFKVFTFSQKISVNFQLLLRFIQGLSLLMALAGIIVAVVLTPLSVTDIFACVLAFIPTGWGILSIACAWKPVLKRMGMWKSIRSLARLYDALMGMLIFLPVALCSWFPFVSTFQTRMMFNQAFSRGLEISLILAGDNPNSGL.

Residues 1–489 (MSRAESSWER…EHRTFLHLYH (489 aa)) lie on the Cytoplasmic side of the membrane. The helical transmembrane segment at 490–510 (SFHRLWIFLAMMFQALAIIAF) threads the bilayer. Residues 511-523 (NKDDLTSRKTLLQ) lie on the Extracellular side of the membrane. The helical transmembrane segment at 524 to 544 (ILSLGPTFVVMKFSESVLEVI) threads the bilayer. Residues 545-560 (MMYGAYSTTRRLAVSR) lie on the Cytoplasmic side of the membrane. The helical transmembrane segment at 561–581 (IFLRFIWFGLASVFISFLYVK) threads the bilayer. The Extracellular segment spans residues 582 to 591 (SLKAPNSDSP). Residues 592–612 (IVQLYLIVIAIYGGVQFFFSI) traverse the membrane as a helical segment. The Cytoplasmic segment spans residues 613 to 658 (LMRIPTCHNIANKCDRWPVIRFFKWMRQERHYVGRGMYERTSDFIK). Residues 659–679 (YLLFWLVVLSAKFSFAYFLQI) traverse the membrane as a helical segment. Topologically, residues 680–722 (KPLVGPTRMIVKQNNIPYSWHDFVSRKNYNALTVASLWAPVVA) are extracellular. Residues 723–743 (IYLLDIHIFYTIFSAFLGFLL) traverse the membrane as a helical segment. The Cytoplasmic segment spans residues 744 to 1457 (GARDRLGEIR…QLLDFFRMMS (714 aa)). Residues 1458-1478 (FFFTTVGFYLCTMLTVLTVYI) form a helical membrane-spanning segment. Residues 1479 to 1512 (FLYGRAYLALSGVGATIRERAILLDDTALSAALN) lie on the Extracellular side of the membrane. Residues 1513–1533 (AQFLFQIGVFTAVPMVLGFIL) form a helical membrane-spanning segment. Topologically, residues 1534–1539 (EQGFLQ) are cytoplasmic. A helical transmembrane segment spans residues 1540 to 1560 (AIVSFITMQFQLCTVFFTFSL). Residues 1561-1609 (GTRTHYFGRTILHGGARYQATGRGFVVKHIKFSENYRLYSRSHFVKAME) are Extracellular-facing. 2 consecutive transmembrane segments (helical) span residues 1610–1630 (VILLLVVYLAYGNDEAGAVSY) and 1631–1651 (ILLTVSSWFLAVSWLFAPYLF). Topologically, residues 1652-1703 (NPAGFEWQKVVEDFKEWTNWLFYRGGIGVKGAESWEAWWEEELSHIRTLSGR) are extracellular. The chain crosses the membrane as a helical span at residues 1704–1724 (IMETILSLRFFIFQYGIVYKL). Residues 1725 to 1732 (KLQGSDTS) are Cytoplasmic-facing. Residues 1733–1753 (FAVYGWSWVAFAMIIVLFKVF) traverse the membrane as a helical segment. Over 1754-1768 (TFSQKISVNFQLLLR) the chain is Extracellular. A helical transmembrane segment spans residues 1769 to 1789 (FIQGLSLLMALAGIIVAVVLT). Residues 1790 to 1795 (PLSVTD) are Cytoplasmic-facing. The helical transmembrane segment at 1796–1816 (IFACVLAFIPTGWGILSIACA) threads the bilayer. Topologically, residues 1817–1838 (WKPVLKRMGMWKSIRSLARLYD) are extracellular. Residues 1839–1859 (ALMGMLIFLPVALCSWFPFVS) form a helical membrane-spanning segment. The Cytoplasmic segment spans residues 1860-1890 (TFQTRMMFNQAFSRGLEISLILAGDNPNSGL).

It belongs to the glycosyltransferase 48 family.

It localises to the cell membrane. It carries out the reaction [(1-&gt;3)-beta-D-glucosyl](n) + UDP-alpha-D-glucose = [(1-&gt;3)-beta-D-glucosyl](n+1) + UDP + H(+). Its function is as follows. Involved in sporophytic and gametophytic development. Required for normal plant development. During pollen formation, required for the entry of microspores into mitosis and microspore symmetric division. May be required for correct temporal and spatial control of callose deposition during pollen mitosis. During plant growth and development, callose is found as a transitory component of the cell plate in dividing cells, is a major component of pollen mother cell walls and pollen tubes, and is found as a structural component of plasmodesmatal canals. This Arabidopsis thaliana (Mouse-ear cress) protein is Callose synthase 9 (CALS9).